A 376-amino-acid chain; its full sequence is Putative phosphoserine aminotransferase (376 aa).

Arginine 50 serves as a coordination point for L-glutamate. Pyridoxal 5'-phosphate contacts are provided by residues 84-85 (AT), phenylalanine 108, threonine 154, aspartate 176, and glutamine 199. At lysine 200 the chain carries N6-(pyridoxal phosphate)lysine. Pyridoxal 5'-phosphate is bound at residue 251–252 (NT).

This sequence belongs to the class-V pyridoxal-phosphate-dependent aminotransferase family. SerC subfamily. Homodimer. Pyridoxal 5'-phosphate serves as cofactor.

The protein localises to the cytoplasm. The enzyme catalyses O-phospho-L-serine + 2-oxoglutarate = 3-phosphooxypyruvate + L-glutamate. It catalyses the reaction 4-(phosphooxy)-L-threonine + 2-oxoglutarate = (R)-3-hydroxy-2-oxo-4-phosphooxybutanoate + L-glutamate. It participates in amino-acid biosynthesis; L-serine biosynthesis; L-serine from 3-phospho-D-glycerate: step 2/3. It functions in the pathway cofactor biosynthesis; pyridoxine 5'-phosphate biosynthesis; pyridoxine 5'-phosphate from D-erythrose 4-phosphate: step 3/5. Functionally, catalyzes the reversible conversion of 3-phosphohydroxypyruvate to phosphoserine and of 3-hydroxy-2-oxo-4-phosphonooxybutanoate to phosphohydroxythreonine. This Mycobacterium bovis (strain ATCC BAA-935 / AF2122/97) protein is Putative phosphoserine aminotransferase.